Here is a 154-residue protein sequence, read N- to C-terminus: Small ribosomal subunit protein uS7 (154 aa).

The protein belongs to the universal ribosomal protein uS7 family.

This Nicotiana plumbaginifolia (Leadwort-leaved tobacco) protein is Small ribosomal subunit protein uS7 (RPS5).